We begin with the raw amino-acid sequence, 121 residues long: Putative iron-sulfur cluster insertion protein ErpA (121 aa).

Residues C49, C113, and C115 each coordinate iron-sulfur cluster.

The protein belongs to the HesB/IscA family. Homodimer. Requires iron-sulfur cluster as cofactor.

In terms of biological role, required for insertion of 4Fe-4S clusters. The chain is Putative iron-sulfur cluster insertion protein ErpA from Nitrosomonas europaea (strain ATCC 19718 / CIP 103999 / KCTC 2705 / NBRC 14298).